The following is a 636-amino-acid chain: Transcription termination factor FttA (636 aa).

A KHa region spans residues 3-70; it reads SEMLEEIKRT…IIIRSDRSVL (68 aa). Residues 71-138 are KHb; that stretch reads MDPEKAIRKI…WAPKILRTPP (68 aa). Residues 179-383 form a metallo-beta-lactamase N-terminus region; sequence WARLTAMGGF…LVMESTYGGH (205 aa). Zn(2+) contacts are provided by His242, His244, Asp246, His247, His329, and Asp352. Positions 384–577 are beta-Casp; sequence EDVQPSRNRA…MNIKTIEGFS (194 aa). The interval 578 to 636 is metallo-beta-lactamase C-terminus; it reads GHSDRRQLMEYVKRISPKPEKILLCHGDNYKTLDLASSIYRTYRIETKTPLNLETVRIQ. His603 provides a ligand contact to Zn(2+).

It belongs to the metallo-beta-lactamase superfamily. RNA-metabolizing metallo-beta-lactamase-like family. FttA subfamily. Homodimer. Interacts with RNA polymerase (RNAP), interacts with the Spt4-Spt5 complex. Does not seem to interact with the RNA degrading exosome. It depends on Zn(2+) as a cofactor.

With respect to regulation, most active at 0.5 M or 0.7 M NaCl, less active at 1.0 M NaCl. Nuclease activity is inhibited by N,N,Tetrakis-(2-pyridylmethyl)-ethylene diamine (TPEN), a specific chelator of zinc ions. Terminates transcription on the whole genome. Termination is linked to FttA-mediated RNA cleavage and does not require NTP hydrolysis. Cleaves endonucleolytically at the RNA exit channel of RNA polymerase (RNAP); the 5'-3' exonuclease activity of this protein degrades the nascent RNA released from RNAP. Functionally, an RNA nuclease, it bind single-stranded RNA (ssRNA) with a preference for U-rich sequences. This Methanothermobacter thermautotrophicus (strain ATCC 29096 / DSM 1053 / JCM 10044 / NBRC 100330 / Delta H) (Methanobacterium thermoautotrophicum) protein is Transcription termination factor FttA.